The primary structure comprises 512 residues: UDP-N-acetylglucosamine--peptide N-acetylglucosaminyltransferase GtfA subunit (512 aa).

Position 16–19 (16–19) interacts with UDP; it reads GVEY. His251 provides a ligand contact to N-acetyl-D-glucosamine. Residues 393–394 and 413–416 contribute to the UDP site; these read QH and EGFG.

It belongs to the glycosyltransferase group 1 family. Glycosyltransferase 4 subfamily. Forms a heterotetramer with 2 subunits each of GtfA and GtfB. Part of the accessory SecA2/SecY2 protein translocation apparatus.

The protein resides in the cytoplasm. Its subcellular location is the cell membrane. The enzyme catalyses L-seryl-[protein] + UDP-N-acetyl-alpha-D-glucosamine = 3-O-[N-acetyl-alpha-D-glucosaminyl]-L-seryl-[protein] + UDP + H(+). Its pathway is protein modification; protein glycosylation. In terms of biological role, required for polymorphic O-glycosylation of the serine-rich repeat protein (SRRP) in this bacteria. Catalyzes the first step in glycosylation by transferring N-acetylglucosamine from UDP-GlcNAc to serine residues in the substrate protein. Part of the accessory SecA2/SecY2 system specifically required to export serine-rich repeat cell wall proteins encoded in the same operon. The GtfA-GtfB complex adds GlcNAc from UDP-GlcNAc to SRRP (experimentally characterized with a truncated SSR1 construct); the alpha linkage was shown for this enzyme but not the residues glycosylated on SRRP. This chain is UDP-N-acetylglucosamine--peptide N-acetylglucosaminyltransferase GtfA subunit, found in Limosilactobacillus reuteri subsp. suis (strain ATCC 53608 / LMG 31752 / 1063) (Lactobacillus reuteri).